A 129-amino-acid polypeptide reads, in one-letter code: Small ribosomal subunit protein uS11 (129 aa).

This sequence belongs to the universal ribosomal protein uS11 family. Part of the 30S ribosomal subunit. Interacts with proteins S7 and S18. Binds to IF-3.

Located on the platform of the 30S subunit, it bridges several disparate RNA helices of the 16S rRNA. Forms part of the Shine-Dalgarno cleft in the 70S ribosome. This chain is Small ribosomal subunit protein uS11, found in Geobacillus kaustophilus (strain HTA426).